A 577-amino-acid polypeptide reads, in one-letter code: Arginine--tRNA ligase (577 aa).

The 'HIGH' region signature appears at 122-132; it reads PNVAKEMHVGH.

It belongs to the class-I aminoacyl-tRNA synthetase family. As to quaternary structure, monomer.

Its subcellular location is the cytoplasm. The catalysed reaction is tRNA(Arg) + L-arginine + ATP = L-arginyl-tRNA(Arg) + AMP + diphosphate. This chain is Arginine--tRNA ligase, found in Salmonella schwarzengrund (strain CVM19633).